The following is a 404-amino-acid chain: MLYYFFKYIDRFSHIPGIGVFKYISFRAASAAILSLCISIFLGKRLIIFFKTAQIKEGIRELDLAGQSEKAHIPTMGGIIIIAATVVPTLLFAKLKNVYIMLLLISIIWMGLIGFIDDYIKVFKRDKKGLAGKFKIVGQVALGVIVGITLIFRDDVVIREFGSNITVIENGQVTINDYKDVKTVKTTIPFLKNNELDYSKLIPWLDSKYMWIVYVLFMIFIIAAVSNGANLTDGLDGLTAGTSAIIGTTLAILAYVSGNVIFSRYLNIMYIPNLAELAIFCTAFVGACVGFLWYNTYPAQIFMGDTGSLAIGSVIAVLAIVIRKELMIPLLCGIFFIETLSVIIQVGYFKYTKYRYGIGKRMFKMAPLHHHFQKLGFHESKIVTRFWIVGIVLAILSLVTLKLR.

10 consecutive transmembrane segments (helical) span residues 30-50, 73-93, 100-120, 132-152, 209-229, 242-262, 274-294, 301-321, 326-346, and 381-401; these read SAAI…IIFF, IPTM…LLFA, IMLL…DDYI, GKFK…TLIF, YMWI…SNGA, TSAI…NVIF, LAEL…FLWY, IFMG…LAIV, LMIP…IIQV, and KIVT…LVTL.

It belongs to the glycosyltransferase 4 family. MraY subfamily. Mg(2+) serves as cofactor.

The protein localises to the cell inner membrane. It carries out the reaction UDP-N-acetyl-alpha-D-muramoyl-L-alanyl-gamma-D-glutamyl-meso-2,6-diaminopimeloyl-D-alanyl-D-alanine + di-trans,octa-cis-undecaprenyl phosphate = di-trans,octa-cis-undecaprenyl diphospho-N-acetyl-alpha-D-muramoyl-L-alanyl-D-glutamyl-meso-2,6-diaminopimeloyl-D-alanyl-D-alanine + UMP. Its pathway is cell wall biogenesis; peptidoglycan biosynthesis. Its function is as follows. Catalyzes the initial step of the lipid cycle reactions in the biosynthesis of the cell wall peptidoglycan: transfers peptidoglycan precursor phospho-MurNAc-pentapeptide from UDP-MurNAc-pentapeptide onto the lipid carrier undecaprenyl phosphate, yielding undecaprenyl-pyrophosphoryl-MurNAc-pentapeptide, known as lipid I. This chain is Phospho-N-acetylmuramoyl-pentapeptide-transferase, found in Amoebophilus asiaticus (strain 5a2).